We begin with the raw amino-acid sequence, 88 residues long: Small ribosomal subunit protein uS17 (88 aa).

The protein belongs to the universal ribosomal protein uS17 family. As to quaternary structure, part of the 30S ribosomal subunit.

Its function is as follows. One of the primary rRNA binding proteins, it binds specifically to the 5'-end of 16S ribosomal RNA. The sequence is that of Small ribosomal subunit protein uS17 from Pseudomonas fluorescens (strain SBW25).